A 949-amino-acid chain; its full sequence is MAM domain-containing glycosylphosphatidylinositol anchor protein 1 (949 aa).

The N-terminal stretch at 1–18 is a signal peptide; the sequence is MEMICVLFLSLVPAYSRG. Ig-like domains are found at residues 24–125 and 132–230; these read PAQA…IRVD and PVLT…KSIT. N-linked (GlcNAc...) asparagine glycosylation is found at Asn-42 and Asn-90. Cystine bridges form between Cys-60-Cys-108 and Cys-157-Cys-214. Residues Asn-235, Asn-247, Asn-257, Asn-292, Asn-307, and Asn-331 are each glycosylated (N-linked (GlcNAc...) asparagine). Residues 240-323 enclose the Ig-like 3 domain; sequence PALKLSVNET…VGNPAKKTVN (84 aa). Residues Cys-262 and Cys-308 are joined by a disulfide bond. Ig-like domains are found at residues 338-432, 440-531, and 537-625; these read PDVI…VEVN, PTIS…ALVQ, and PPVV…FQVS. Cys-357 and Cys-415 form a disulfide bridge. Asn-432 is a glycosylation site (N-linked (GlcNAc...) asparagine). Disulfide bonds link Cys-463-Cys-513 and Cys-559-Cys-609. 3 N-linked (GlcNAc...) asparagine glycosylation sites follow: Asn-577, Asn-649, and Asn-820. The Fibronectin type-III domain maps to 637-737; it reads TPNPTLSQKQ…ARIIRYMEPI (101 aa). The region spanning 745-912 is the MAM domain; sequence NTCRFEDEKI…VTLKKGDCPR (168 aa). Residue Ser-926 is the site of GPI-anchor amidated serine attachment. The propeptide at 927-949 is removed in mature form; sequence GVSAQHGPCLCGPLTFFLYVLLR.

In terms of assembly, interacts heterophilically through its MAM domain with proteins in axon-rich regions and through its Ig-like domains with proteins in differentiating muscle. In terms of tissue distribution, in the embryonic brachial spinal cord, selectively expressed by medial lateral motor column neurons, some populations of dorsal root ganglion neurons, and interneurons.

The protein resides in the cell membrane. Required for radial migration of cortical neurons in the superficial layer of the neocortex. The polypeptide is MAM domain-containing glycosylphosphatidylinositol anchor protein 1 (Gallus gallus (Chicken)).